We begin with the raw amino-acid sequence, 221 residues long: FMN-dependent NADH:quinone oxidoreductase 1 (221 aa).

FMN contacts are provided by residues 17 to 19 (SAS) and 148 to 151 (SSGG).

It belongs to the azoreductase type 1 family. As to quaternary structure, homodimer. Requires FMN as cofactor.

The catalysed reaction is 2 a quinone + NADH + H(+) = 2 a 1,4-benzosemiquinone + NAD(+). It catalyses the reaction N,N-dimethyl-1,4-phenylenediamine + anthranilate + 2 NAD(+) = 2-(4-dimethylaminophenyl)diazenylbenzoate + 2 NADH + 2 H(+). Its function is as follows. Quinone reductase that provides resistance to thiol-specific stress caused by electrophilic quinones. Also exhibits azoreductase activity. Catalyzes the reductive cleavage of the azo bond in aromatic azo compounds to the corresponding amines. The polypeptide is FMN-dependent NADH:quinone oxidoreductase 1 (Clostridium acetobutylicum (strain ATCC 824 / DSM 792 / JCM 1419 / IAM 19013 / LMG 5710 / NBRC 13948 / NRRL B-527 / VKM B-1787 / 2291 / W)).